The chain runs to 806 residues: Leucine--tRNA ligase (806 aa).

The 'HIGH' region signature appears at 54–64 (SYPSGDLHMGH). Residues 571-575 (KMSKS) carry the 'KMSKS' region motif. Position 574 (Lys-574) interacts with ATP.

The protein belongs to the class-I aminoacyl-tRNA synthetase family.

It is found in the cytoplasm. It carries out the reaction tRNA(Leu) + L-leucine + ATP = L-leucyl-tRNA(Leu) + AMP + diphosphate. In Tropheryma whipplei (strain TW08/27) (Whipple's bacillus), this protein is Leucine--tRNA ligase.